The primary structure comprises 367 residues: Putative S-adenosyl-L-methionine-dependent methyltransferase MT0751 (367 aa).

Residues Asp137 and 166-167 (DL) contribute to the S-adenosyl-L-methionine site. A compositionally biased stretch (polar residues) spans 348–358 (TRSDAHQASTT). Residues 348-367 (TRSDAHQASTTAPPPPGLTG) form a disordered region.

This sequence belongs to the UPF0677 family.

In terms of biological role, exhibits S-adenosyl-L-methionine-dependent methyltransferase activity. The polypeptide is Putative S-adenosyl-L-methionine-dependent methyltransferase MT0751 (Mycobacterium tuberculosis (strain CDC 1551 / Oshkosh)).